A 212-amino-acid polypeptide reads, in one-letter code: Glycerol-3-phosphate acyltransferase (212 aa).

The next 5 helical transmembrane spans lie at 3–23, 51–71, 78–98, 115–135, and 139–159; these read ILLA…VIVS, KAAI…VWLA, DVAI…PVFF, AVHP…AFFF, and SLAA…LFGT.

It belongs to the PlsY family. Probably interacts with PlsX.

It localises to the cell inner membrane. The enzyme catalyses an acyl phosphate + sn-glycerol 3-phosphate = a 1-acyl-sn-glycero-3-phosphate + phosphate. The protein operates within lipid metabolism; phospholipid metabolism. In terms of biological role, catalyzes the transfer of an acyl group from acyl-phosphate (acyl-PO(4)) to glycerol-3-phosphate (G3P) to form lysophosphatidic acid (LPA). This enzyme utilizes acyl-phosphate as fatty acyl donor, but not acyl-CoA or acyl-ACP. The chain is Glycerol-3-phosphate acyltransferase from Burkholderia multivorans (strain ATCC 17616 / 249).